The following is a 411-amino-acid chain: S-adenosylmethionine synthase (411 aa).

ATP is bound at residue His15. A Mg(2+)-binding site is contributed by Asp17. Residue Glu43 participates in K(+) binding. Residues Glu56 and Gln99 each contribute to the L-methionine site. Residues 99–109 (QSPDIAQGVDT) form a flexible loop region. ATP contacts are provided by residues 174–176 (DGK), 247–248 (RF), Asp256, 262–263 (RK), Ala279, and Lys283. Asp256 contacts L-methionine. Lys287 lines the L-methionine pocket.

Belongs to the AdoMet synthase family. As to quaternary structure, homotetramer; dimer of dimers. Requires Mg(2+) as cofactor. The cofactor is K(+).

The protein localises to the cytoplasm. The enzyme catalyses L-methionine + ATP + H2O = S-adenosyl-L-methionine + phosphate + diphosphate. It participates in amino-acid biosynthesis; S-adenosyl-L-methionine biosynthesis; S-adenosyl-L-methionine from L-methionine: step 1/1. Its function is as follows. Catalyzes the formation of S-adenosylmethionine (AdoMet) from methionine and ATP. The overall synthetic reaction is composed of two sequential steps, AdoMet formation and the subsequent tripolyphosphate hydrolysis which occurs prior to release of AdoMet from the enzyme. In Streptomyces spectabilis, this protein is S-adenosylmethionine synthase.